The primary structure comprises 154 residues: Small heat shock protein C2 (154 aa).

A sHSP domain is found at 43-154; sequence STEKNLIPRT…GKTRKIEVKG (112 aa).

It belongs to the small heat shock protein (HSP20) family.

The protein is Small heat shock protein C2 (hspC2) of Rickettsia felis (strain ATCC VR-1525 / URRWXCal2) (Rickettsia azadi).